The sequence spans 341 residues: Methionine import ATP-binding protein MetN 2 (341 aa).

One can recognise an ABC transporter domain in the interval 2 to 241; sequence IELKEVVKEY…PQHAVTKRFV (240 aa). An ATP-binding site is contributed by 38–45; that stretch reads GFSGAGKS.

This sequence belongs to the ABC transporter superfamily. Methionine importer (TC 3.A.1.24) family. The complex is composed of two ATP-binding proteins (MetN), two transmembrane proteins (MetI) and a solute-binding protein (MetQ).

It localises to the cell membrane. The catalysed reaction is L-methionine(out) + ATP + H2O = L-methionine(in) + ADP + phosphate + H(+). It catalyses the reaction D-methionine(out) + ATP + H2O = D-methionine(in) + ADP + phosphate + H(+). Its function is as follows. Part of the ABC transporter complex MetNIQ involved in methionine import. Responsible for energy coupling to the transport system. In Staphylococcus aureus (strain MRSA252), this protein is Methionine import ATP-binding protein MetN 2.